Reading from the N-terminus, the 316-residue chain is MDLCVTIKGVSFLLQAGLGILANALVLLAYAHIRLAEARLQPVDAILCHLALVDLLLLLTRGVPQTMTVFGMRNLLDDTGCKVVIYTYRIARALSVCITCMLSVFQAVTVAPAAGPLLSGVKARLPQLLAPTFAALWFINMAVCIAAPFFSVAPRNGTVPPFTLNLGFCHVDFHDNLSYVLNGVAVSVRDFAFVGAMLASSGFILLLLHRHRRQVRAVRRSQGSTMETRAARTVLMLVILYSVFFGIDNVIWIYMLTVAQVPPVVADMRVFFSSCYASLSPFLIISSNRKLKARMVCATSEQERQAEDGKNSSGKN.

The Extracellular portion of the chain corresponds to 1–8 (MDLCVTIK). Residues 9–29 (GVSFLLQAGLGILANALVLLA) form a helical membrane-spanning segment. Residues 30-39 (YAHIRLAEAR) are Cytoplasmic-facing. The chain crosses the membrane as a helical span at residues 40-60 (LQPVDAILCHLALVDLLLLLT). At 61–97 (RGVPQTMTVFGMRNLLDDTGCKVVIYTYRIARALSVC) the chain is on the extracellular side. A disulfide bridge links C81 with C169. Residues 98–118 (ITCMLSVFQAVTVAPAAGPLL) form a helical membrane-spanning segment. The Cytoplasmic portion of the chain corresponds to 119–132 (SGVKARLPQLLAPT). The chain crosses the membrane as a helical span at residues 133-153 (FAALWFINMAVCIAAPFFSVA). The Extracellular portion of the chain corresponds to 154–187 (PRNGTVPPFTLNLGFCHVDFHDNLSYVLNGVAVS). 2 N-linked (GlcNAc...) asparagine glycosylation sites follow: N156 and N176. A helical transmembrane segment spans residues 188–208 (VRDFAFVGAMLASSGFILLLL). Residues 209–233 (HRHRRQVRAVRRSQGSTMETRAART) lie on the Cytoplasmic side of the membrane. The helical transmembrane segment at 234 to 254 (VLMLVILYSVFFGIDNVIWIY) threads the bilayer. The Extracellular segment spans residues 255 to 264 (MLTVAQVPPV). Residues 265–285 (VADMRVFFSSCYASLSPFLII) form a helical membrane-spanning segment. Residues 286–316 (SSNRKLKARMVCATSEQERQAEDGKNSSGKN) are Cytoplasmic-facing.

This sequence belongs to the G-protein coupled receptor 1 family. As to expression, highly expressed in the olfactory rosette where it localizes to a subset of olfactory sensory neurons, mainly in the apical region of the neuroepithelium. Not detected in other tissues tested.

Its subcellular location is the cell membrane. Functionally, probable pheromone receptor. Shows high specificity for 4-hydroxyphenylacetic acid. Activation of the receptor stimulates intracellular calcium release. This chain is Olfactory receptor class A-like protein 1, found in Danio rerio (Zebrafish).